The primary structure comprises 1038 residues: Kinesin-like protein KIF17 (1038 aa).

One can recognise a Kinesin motor domain in the interval 5–335 (SVKVVVRCRP…LRYANRAKNI (331 aa)). 91-98 (GQTGSGKS) contacts ATP. Positions 346 to 470 (KDALLREYQE…ETEAILKAEV (125 aa)) form a coiled coil. Disordered stretches follow at residues 379 to 401 (TQTP…VQQD), 503 to 559 (LSMP…GPEE), and 636 to 657 (DSSQ…LLEP). Polar residues-rich tracts occupy residues 533 to 551 (SEFS…SATS) and 636 to 651 (DSSQ…QPSS). Residues 748–855 (QQVLARLQLL…QLEKIDYLAT (108 aa)) are a coiled coil. 2 disordered regions span residues 916-940 (VVPT…PHMQ) and 976-1038 (MKSL…GEPL). Residues 983–1000 (NSPPGLNSSLSNNSALPP) are compositionally biased toward low complexity.

This sequence belongs to the TRAFAC class myosin-kinesin ATPase superfamily. Kinesin family. In terms of assembly, homodimer. Interacts with APBA1 (via PDZ domain); the interaction is direct and is required for association of KIF17 with the cargo that is to be transported. Interacts with IFT B complex components IFT52 and IFT57. Interacts with IFT70B. Interacts with PIWIL1. Interacts with TBATA. In terms of tissue distribution, highly expressed in the gray matter of the brain, especially in the hippocampus.

The protein resides in the cytoplasm. It is found in the cytoskeleton. It localises to the cell projection. The protein localises to the cilium. Its subcellular location is the dendrite. In terms of biological role, dendrite-specific motor protein which, in association with the Apba1-containing complex (LIN-10-LIN-2-LIN-7 complex), transports vesicles containing N-methyl-D-aspartate (NMDA) receptor subunit NR2B along microtubules. The chain is Kinesin-like protein KIF17 (Kif17) from Mus musculus (Mouse).